The chain runs to 278 residues: tRNA pseudouridine synthase A (278 aa).

Residue D52 is the Nucleophile of the active site. Y111 lines the substrate pocket. The segment covering 253–264 (AKAGPLEAAPLG) has biased composition (low complexity). The disordered stretch occupies residues 253-278 (AKAGPLEAAPLGEAPLKEATLKEDWR). A compositionally biased stretch (basic and acidic residues) spans 267-278 (PLKEATLKEDWR).

This sequence belongs to the tRNA pseudouridine synthase TruA family. As to quaternary structure, homodimer.

The enzyme catalyses uridine(38/39/40) in tRNA = pseudouridine(38/39/40) in tRNA. Its function is as follows. Formation of pseudouridine at positions 38, 39 and 40 in the anticodon stem and loop of transfer RNAs. This Rhodospirillum rubrum (strain ATCC 11170 / ATH 1.1.1 / DSM 467 / LMG 4362 / NCIMB 8255 / S1) protein is tRNA pseudouridine synthase A.